The chain runs to 943 residues: UvrABC system protein A (943 aa).

An ATP-binding site is contributed by 32–39; it reads GLSGSGKS. The segment at 251 to 278 adopts a C4-type zinc-finger fold; sequence CPVCGFTVPELEPRLFSFNAPFGSCPTC. ABC transporter domains lie at 308 to 589 and 609 to 937; these read WNPI…KKSI and GSGR…QYLK. 641–648 serves as a coordination point for ATP; the sequence is GVSGSGKS. The segment at 740-766 adopts a C4-type zinc-finger fold; that stretch reads CEACSGDGIIKIEMHFLPDVYVPCEVC.

It belongs to the ABC transporter superfamily. UvrA family. In terms of assembly, forms a heterotetramer with UvrB during the search for lesions.

The protein localises to the cytoplasm. Functionally, the UvrABC repair system catalyzes the recognition and processing of DNA lesions. UvrA is an ATPase and a DNA-binding protein. A damage recognition complex composed of 2 UvrA and 2 UvrB subunits scans DNA for abnormalities. When the presence of a lesion has been verified by UvrB, the UvrA molecules dissociate. The chain is UvrABC system protein A from Streptococcus mutans serotype c (strain ATCC 700610 / UA159).